A 735-amino-acid chain; its full sequence is Receptor-type guanylate cyclase gcy-27 (735 aa).

The N-linked (GlcNAc...) asparagine glycan is linked to N11. The chain crosses the membrane as a helical span at residues 28–48 (FIICTLPVPIYFVVVAIWTIN). The 278-residue stretch at 188–465 (ALTSRRRVFG…IENLRNAIAI (278 aa)) folds into the Protein kinase domain. Positions 538–668 (TVMFVQICDF…DTVNFASRMQ (131 aa)) constitute a Guanylate cyclase domain.

This sequence belongs to the adenylyl cyclase class-4/guanylyl cyclase family. As to expression, expressed bilaterally in ASK, ASI and ASJ sensory neurons.

The protein localises to the cell membrane. It catalyses the reaction GTP = 3',5'-cyclic GMP + diphosphate. Functionally, guanylate cyclase involved in the production of the second messenger cGMP. May be involved in sensitivity to quinine by regulating egl-4 activity through the production of cGMP. Promotes the calcium flux to the cytoplasm in ASJ sensory neurons upon removal of a nitric oxide (NO) stimulus and is thereby involved in the behavioral avoidance response to NO-producing organisms like P.aeruginosa. This Caenorhabditis elegans protein is Receptor-type guanylate cyclase gcy-27.